The primary structure comprises 113 residues: Photosystem II reaction center Psb28 protein (113 aa).

It belongs to the Psb28 family. In terms of assembly, part of the photosystem II complex.

The protein resides in the cellular thylakoid membrane. The protein is Photosystem II reaction center Psb28 protein of Nostoc punctiforme (strain ATCC 29133 / PCC 73102).